A 311-amino-acid polypeptide reads, in one-letter code: 4-hydroxy-tetrahydrodipicolinate synthase (311 aa).

Residue Thr51 participates in pyruvate binding. Tyr140 serves as the catalytic Proton donor/acceptor. Catalysis depends on Lys168, which acts as the Schiff-base intermediate with substrate. A pyruvate-binding site is contributed by Ile209.

Belongs to the DapA family. Homotetramer; dimer of dimers.

It is found in the cytoplasm. The catalysed reaction is L-aspartate 4-semialdehyde + pyruvate = (2S,4S)-4-hydroxy-2,3,4,5-tetrahydrodipicolinate + H2O + H(+). It participates in amino-acid biosynthesis; L-lysine biosynthesis via DAP pathway; (S)-tetrahydrodipicolinate from L-aspartate: step 3/4. In terms of biological role, catalyzes the condensation of (S)-aspartate-beta-semialdehyde [(S)-ASA] and pyruvate to 4-hydroxy-tetrahydrodipicolinate (HTPA). The sequence is that of 4-hydroxy-tetrahydrodipicolinate synthase from Streptococcus pneumoniae (strain ATCC BAA-255 / R6).